A 174-amino-acid polypeptide reads, in one-letter code: Gamma-crystallin E (174 aa).

Beta/gamma crystallin 'Greek key' domains follow at residues 2–40 and 41–83; these read GKIT…RVDS and GCWM…RLIP. The tract at residues 84 to 87 is connecting peptide; sequence HSSS. Beta/gamma crystallin 'Greek key' domains are found at residues 88 to 128 and 129 to 171; these read HRIR…HVME and GYWV…RRIM.

It belongs to the beta/gamma-crystallin family. As to expression, detected in the superior olivary complex and fibers of the ventral aoustic stria of the auditory hindbrain.

In terms of biological role, crystallins are the dominant structural components of the vertebrate eye lens. The protein is Gamma-crystallin E (Cryge) of Rattus norvegicus (Rat).